The chain runs to 353 residues: Probable WRKY transcription factor 7 (353 aa).

The interval 117–259 (VEEKKPETSS…SSRCHCSKKR (143 aa)) is disordered. Residues 158–176 (SHNNNNNQNQTKNGSSSSS) show a composition bias toward low complexity. Composition is skewed to polar residues over residues 184–204 (APST…SFMS) and 213–229 (THMS…QLSG). Residues 275 to 341 (KMADIPSDEF…YEGDHNHALV (67 aa)) constitute a DNA-binding region (WRKY).

The protein belongs to the WRKY group II-d family. In young, mature and senescent leaves.

The protein resides in the nucleus. Its function is as follows. Transcription factor. Interacts specifically with the W box (5'-(T)TGAC[CT]-3'), a frequently occurring elicitor-responsive cis-acting element. This is Probable WRKY transcription factor 7 (WRKY7) from Arabidopsis thaliana (Mouse-ear cress).